A 119-amino-acid chain; its full sequence is Large ribosomal subunit protein bL20 (119 aa).

The protein belongs to the bacterial ribosomal protein bL20 family.

Functionally, binds directly to 23S ribosomal RNA and is necessary for the in vitro assembly process of the 50S ribosomal subunit. It is not involved in the protein synthesizing functions of that subunit. This is Large ribosomal subunit protein bL20 from Shewanella frigidimarina (strain NCIMB 400).